The sequence spans 311 residues: Acetyl-coenzyme A carboxylase carboxyl transferase subunit beta (311 aa).

One can recognise a CoA carboxyltransferase N-terminal domain in the interval 32-299 (LWVKCPVSEE…TSMPAALTPP (268 aa)). Residues 291–311 (SMPAALTPPAPDHVVADGGSH) are disordered.

The protein belongs to the AccD/PCCB family. Acetyl-CoA carboxylase is a heterohexamer composed of biotin carboxyl carrier protein (AccB), biotin carboxylase (AccC) and two subunits each of ACCase subunit alpha (AccA) and ACCase subunit beta (AccD).

The protein localises to the cytoplasm. The enzyme catalyses N(6)-carboxybiotinyl-L-lysyl-[protein] + acetyl-CoA = N(6)-biotinyl-L-lysyl-[protein] + malonyl-CoA. It functions in the pathway lipid metabolism; malonyl-CoA biosynthesis; malonyl-CoA from acetyl-CoA: step 1/1. In terms of biological role, component of the acetyl coenzyme A carboxylase (ACC) complex. Biotin carboxylase (BC) catalyzes the carboxylation of biotin on its carrier protein (BCCP) and then the CO(2) group is transferred by the transcarboxylase to acetyl-CoA to form malonyl-CoA. The chain is Acetyl-coenzyme A carboxylase carboxyl transferase subunit beta from Maricaulis maris (strain MCS10) (Caulobacter maris).